The chain runs to 163 residues: Cytochrome c-type biogenesis protein CcmE (163 aa).

The Cytoplasmic segment spans residues 1–8 (MNPRRKKR). The chain crosses the membrane as a helical; Signal-anchor for type II membrane protein span at residues 9–29 (LTLAVALIVGVAGAASLLLYA). Over 30–163 (LNSNLNLFYT…QEGVEKTAQY (134 aa)) the chain is Periplasmic. Heme contacts are provided by His-131 and Tyr-135.

Belongs to the CcmE/CycJ family.

Its subcellular location is the cell inner membrane. In terms of biological role, heme chaperone required for the biogenesis of c-type cytochromes. Transiently binds heme delivered by CcmC and transfers the heme to apo-cytochromes in a process facilitated by CcmF and CcmH. The chain is Cytochrome c-type biogenesis protein CcmE from Shewanella denitrificans (strain OS217 / ATCC BAA-1090 / DSM 15013).